We begin with the raw amino-acid sequence, 392 residues long: MASVEEIRNAQRAKGPATILAIGTATPDHCVYQSDYADYYFRVTKSEHMTELKKKFNRICDKSMIKKRYIHLTEEMLEEHPNIGAYMAPSLNIRQEIITVEVPKLGKEAALKALKEWGQPKSKITHLVFCTTSGVEMPGADYKLANLLGLETSVRRVMLYHQGCYAGGTVLRTAKDLAENNAGARVLVVCSEITVVTFRGPSEDALDSLVGQALFGDGSAAVIVGSDPDVSIERPLFQLVSAAQTFIPNSAGAIAGNLREVGLTFHLWPNVPTLISENVEKCLTQAFDPLGISDWNSLFWIAHPGGPAILDAVEAKLNLDKKKLEATRHVLSEYGNMSSACVLFILDEMRKKSHKGEKATTGEGLDWGVLFGFGPGLTIETVVLHSIPMVTN.

A substrate-binding site is contributed by 55–58; sequence KFNR. C164 is an active-site residue. Substrate is bound by residues L267 and 305–307; that span reads GGP.

Belongs to the thiolase-like superfamily. Chalcone/stilbene synthases family. As to quaternary structure, homodimer.

The protein localises to the cytoplasm. It carries out the reaction 4-coumaroyl-CoA + 3 malonyl-CoA + 3 H(+) = trans-resveratrol + 4 CO2 + 4 CoA. Its pathway is phytoalexin biosynthesis; 3,4',5-trihydroxystilbene biosynthesis; 3,4',5-trihydroxystilbene from trans-4-coumarate: step 2/2. Functionally, mediates resistance to pathogens which are sensitive to stilbenes. In Vitis vinifera (Grape), this protein is Stilbene synthase 3.